Here is a 601-residue protein sequence, read N- to C-terminus: Serine/threonine-protein phosphatase 2A 65 kDa regulatory subunit A beta isoform (601 aa).

Alanine 2 is modified (N-acetylalanine). 15 HEAT repeats span residues aspartate 20 to arginine 58, threonine 59 to aspartate 96, phenylalanine 97 to alanine 135, leucine 136 to alanine 173, valine 174 to serine 212, valine 213 to aspartate 251, leucine 252 to isoleucine 290, threonine 291 to isoleucine 333, isoleucine 334 to asparagine 372, threonine 373 to glutamine 411, leucine 412 to phenylalanine 450, phenylalanine 451 to tryptophan 489, alanine 490 to isoleucine 528, threonine 529 to alanine 567, and leucine 568 to alanine 601.

Belongs to the phosphatase 2A regulatory subunit A family. PP2A consists of a common heterodimeric core enzyme, composed of a 36 kDa catalytic subunit (subunit C) and a 65 kDa constant regulatory subunit (PR65 or subunit A), that associates with a variety of regulatory subunits. Proteins that associate with the core dimer include three families of regulatory subunits B (the R2/B/PR55/B55, R3/B''/PR72/PR130/PR59 and R5/B'/B56 families), the 48 kDa variable regulatory subunit, viral proteins, and cell signaling molecules. Interacts with IPO9. Interacts with SGO1. Interacts with RAF1.

Functionally, the PR65 subunit of protein phosphatase 2A serves as a scaffolding molecule to coordinate the assembly of the catalytic subunit and a variable regulatory B subunit. In Homo sapiens (Human), this protein is Serine/threonine-protein phosphatase 2A 65 kDa regulatory subunit A beta isoform (PPP2R1B).